We begin with the raw amino-acid sequence, 676 residues long: Phosphatidylinositol-3,5-bisphosphate 3-phosphatase MTMR6 (676 aa).

The Myotubularin phosphatase domain occupies 125-501 (GWRRLDWNSE…ARFTVWTAMY (377 aa)). The a 1,2-diacyl-sn-glycero-3-phospho-(1D-myo-inositol-3,5-bisphosphate) site is built by Asn-249, Asn-274, and Ile-275. Residues Asn-249, Asn-274, and Ile-275 each coordinate a 1,2-diacyl-sn-glycero-3-phospho-(1D-myo-inositol-3-phosphate). Residues 249 to 252 (NKVQ), 274 to 275 (NI), and 335 to 341 (CSDGWDR) contribute to the substrate site. Cys-335 acts as the Phosphocysteine intermediate in catalysis. Ser-336, Asp-337, Gly-338, Trp-339, Asp-340, Arg-341, Lys-377, and Arg-381 together coordinate a 1,2-diacyl-sn-glycero-3-phospho-(1D-myo-inositol-3,5-bisphosphate). Positions 336, 337, 338, 339, 340, and 341 each coordinate a 1,2-diacyl-sn-glycero-3-phospho-(1D-myo-inositol-3-phosphate). Residue Arg-381 coordinates a 1,2-diacyl-sn-glycero-3-phospho-(1D-myo-inositol-3-phosphate). Arg-381 contributes to the substrate binding site. An FYVE-type zinc finger spans residues 618–675 (KWQPLRGADRCSNPACRGEFSSTIERRIHCHLCGMIFCRRCLKVSADERERVCDKCKT).

This sequence belongs to the protein-tyrosine phosphatase family. Non-receptor class myotubularin subfamily. Heterodimer with mtm-9. In terms of tissue distribution, expressed in intestinal cells. Expressed in head neurons, pre-anal ganglion, hypodermal cells, anal depressor muscle and non-neuronal cells in the tail.

It is found in the cytoplasm. The protein localises to the membrane. Its subcellular location is the apical cell membrane. The catalysed reaction is a 1,2-diacyl-sn-glycero-3-phospho-(1D-myo-inositol-3,5-bisphosphate) + H2O = a 1,2-diacyl-sn-glycero-3-phospho-(1D-myo-inositol-5-phosphate) + phosphate. The enzyme catalyses a 1,2-diacyl-sn-glycero-3-phospho-(1D-myo-inositol-3-phosphate) + H2O = a 1,2-diacyl-sn-glycero-3-phospho-(1D-myo-inositol) + phosphate. It carries out the reaction 1,2-dioctanoyl-sn-glycero-3-phospho-(1D-myo-inositol-3,5-bisphosphate) + H2O = 1,2-dioctanoyl-sn-glycero-3-phospho-(1D-myo-inositol-5-phosphate) + phosphate. It catalyses the reaction 1,2-dioctanoyl-sn-glycero-3-phospho-(1-D-myo-inositol-3-phosphate) + H2O = 1,2-dioctanoyl-sn-glycero-3-phospho-(1D-myo-inositol) + phosphate. In terms of biological role, probable lipid phosphatase that specifically dephosphorylates the D-3 position of phosphatidylinositol 3-phosphate and phosphatidylinositol 3,5-bisphosphate, generating phosphatidylinositol and phosphatidylinositol 5-phosphate. In association with mtm-9, plays a role in endosome trafficking probably by regulating phosphatidylinositol-3-phosphate levels. Regulates fluid phase endocytosis in coelomocytes. Controls the endosomal localization of sorting nexin snx-3 and the levels of sorting receptor mig-14. By regulating the retrograde transport of mig-14, may be involved in the secretion of Wnt ligands such as egl-20. Regulates posterior migration of QL neuroblast descendants and the anterior migration of QR neuroblast descendants and HSN neurons during larval development. Involved in the formation of correct synapse number in DA9 motor neurons probably in part by regulating the secretion of Wnt ligand egl-20. This chain is Phosphatidylinositol-3,5-bisphosphate 3-phosphatase MTMR6, found in Caenorhabditis elegans.